The primary structure comprises 342 residues: Nucleoid-associated protein Sfri_2491 (342 aa).

Belongs to the YejK family.

The protein localises to the cytoplasm. It is found in the nucleoid. The protein is Nucleoid-associated protein Sfri_2491 of Shewanella frigidimarina (strain NCIMB 400).